The primary structure comprises 230 residues: Putative transcription factor bHLH107 (230 aa).

The bHLH domain occupies 44–93 (ASLRNHKEAERKRRARINSHLNKLRKLLSCNSKTDKSTLLAKVVQRVKEL).

As to quaternary structure, homodimer.

The protein resides in the nucleus. In Arabidopsis thaliana (Mouse-ear cress), this protein is Putative transcription factor bHLH107 (BHLH107).